Consider the following 122-residue polypeptide: MIQQETYLNVADNSGAKKLRVIRVIGGFHKKYGTVGDIVVCSVREAIPNSDVKKGDVVRAVIVRTKKEIRRNDGTYIRFDDNAAVLIDKFNAPRGTRIFGPVARELREKGFMKIVSLAPEVW.

It belongs to the universal ribosomal protein uL14 family. As to quaternary structure, part of the 50S ribosomal subunit. Forms a cluster with proteins L3 and L19. In the 70S ribosome, L14 and L19 interact and together make contacts with the 16S rRNA in bridges B5 and B8.

Functionally, binds to 23S rRNA. Forms part of two intersubunit bridges in the 70S ribosome. The polypeptide is Large ribosomal subunit protein uL14 (Thermotoga maritima (strain ATCC 43589 / DSM 3109 / JCM 10099 / NBRC 100826 / MSB8)).